The sequence spans 217 residues: MOB kinase activator 3A (217 aa).

Residues C83, C88, H165, and H170 each contribute to the Zn(2+) site.

The protein belongs to the MOB1/phocein family.

In terms of biological role, may regulate the activity of kinases. This chain is MOB kinase activator 3A (Mob3a), found in Mus musculus (Mouse).